The sequence spans 121 residues: Large ribosomal subunit protein bL12 (121 aa).

This sequence belongs to the bacterial ribosomal protein bL12 family. In terms of assembly, homodimer. Part of the ribosomal stalk of the 50S ribosomal subunit. Forms a multimeric L10(L12)X complex, where L10 forms an elongated spine to which 2 to 4 L12 dimers bind in a sequential fashion. Binds GTP-bound translation factors.

Forms part of the ribosomal stalk which helps the ribosome interact with GTP-bound translation factors. Is thus essential for accurate translation. The chain is Large ribosomal subunit protein bL12 from Streptococcus suis (strain 98HAH33).